The following is a 452-amino-acid chain: MARRYFGTDGIRGKVGDPPITPDFVLRLGYAAGKVLAGADTWAKTGSRPTVLIGKDTRVSGYMLEAALESGFSAAGVDVMLAGPMPTPGVAYLTRALRLAAGVVISASHNPYYDNGIKFFSADGNKLPDEVESQIEEQLDKPLECAPSERLGKARRLDDAAGRYIEFCKGTFPQAFDLRGMKLVVDCAHGAAYDVAPHVFHELGADVITIGVSPNGFNINDGVGATAPDALVRAVRANKADLGVALDGDADRLQIVDANGRLYNGDELLYVLVQDRIATQGKVDGAVGTLMTNMAVEVALKNKGVQFVRAAVGDRYVLEKLREHGWELGAEGSGHILSLDRHSTGDGIVSALLVLAAMQRSGRSLEQLLEGVTLFPQKLINVRMQPGADWKGNDAIRRAINEAEGALDGSGRVLIRASGTEPVLRVMVEAAHEKDAVHHAERIATVVKQATS.

The active-site Phosphoserine intermediate is the Ser108. Mg(2+) contacts are provided by Ser108, Asp247, Asp249, and Asp251. Ser108 carries the phosphoserine modification.

The protein belongs to the phosphohexose mutase family. Requires Mg(2+) as cofactor. In terms of processing, activated by phosphorylation.

The catalysed reaction is alpha-D-glucosamine 1-phosphate = D-glucosamine 6-phosphate. Functionally, catalyzes the conversion of glucosamine-6-phosphate to glucosamine-1-phosphate. The chain is Phosphoglucosamine mutase from Paraburkholderia phymatum (strain DSM 17167 / CIP 108236 / LMG 21445 / STM815) (Burkholderia phymatum).